We begin with the raw amino-acid sequence, 1694 residues long: Protein TOPAZ1 (1694 aa).

4 disordered regions span residues 1 to 135 (MRRP…PGLD), 322 to 341 (EESS…EKAD), 600 to 629 (ELSR…TGNK), and 891 to 920 (ISQE…EPSD). The span at 31–40 (GAAGGCGPEA) shows a compositional bias: gly residues. A compositionally biased stretch (basic and acidic residues) spans 95–116 (SDPRGLEAAKEAELPLQTERHT). Residues 603–627 (RSGSEVISNTTEDTQLTSETQSLTG) are compositionally biased toward polar residues. Positions 903–920 (QSTDSKYMETPVKKEPSD) are enriched in basic and acidic residues.

It is found in the cytoplasm. The protein localises to the cytosol. Functionally, important for normal spermatogenesis and male fertility. Specifically required for progression to the post-meiotic stages of spermatocyte development. Seems to be necessary for normal expression levels of a number of testis-expressed gene transcripts, although its role in this process is unclear. This is Protein TOPAZ1 (TOPAZ1) from Gorilla gorilla gorilla (Western lowland gorilla).